A 289-amino-acid polypeptide reads, in one-letter code: Acetyl-coenzyme A carboxylase carboxyl transferase subunit beta (289 aa).

The region spanning 28 to 289 (VMTKCPKCKK…QGGEMAVWQS (262 aa)) is the CoA carboxyltransferase N-terminal domain. Residues Cys-32, Cys-35, Cys-51, and Cys-54 each contribute to the Zn(2+) site. The segment at 32 to 54 (CPKCKKIMYTKELLKNLKVCVNC) adopts a C4-type zinc-finger fold.

This sequence belongs to the AccD/PCCB family. As to quaternary structure, acetyl-CoA carboxylase is a heterohexamer composed of biotin carboxyl carrier protein (AccB), biotin carboxylase (AccC) and two subunits each of ACCase subunit alpha (AccA) and ACCase subunit beta (AccD). Requires Zn(2+) as cofactor.

Its subcellular location is the cytoplasm. It carries out the reaction N(6)-carboxybiotinyl-L-lysyl-[protein] + acetyl-CoA = N(6)-biotinyl-L-lysyl-[protein] + malonyl-CoA. It participates in lipid metabolism; malonyl-CoA biosynthesis; malonyl-CoA from acetyl-CoA: step 1/1. Its function is as follows. Component of the acetyl coenzyme A carboxylase (ACC) complex. Biotin carboxylase (BC) catalyzes the carboxylation of biotin on its carrier protein (BCCP) and then the CO(2) group is transferred by the transcarboxylase to acetyl-CoA to form malonyl-CoA. The protein is Acetyl-coenzyme A carboxylase carboxyl transferase subunit beta of Bacillus cereus (strain ATCC 10987 / NRS 248).